We begin with the raw amino-acid sequence, 124 residues long: MSGRGKSGKARTKAKTRSSRAGLQFPVGRVHRFLRKGNYAKRVGGGAPVYMAAVLEYLTAEILELAGNAARDNKKSRIIPRHLQLAVRNDEELNKLLGGVTIAQGGVLPNIQAVLLPKKTAKSS.

Residues 1 to 18 (MSGRGKSGKARTKAKTRS) are compositionally biased toward basic residues. The tract at residues 1 to 21 (MSGRGKSGKARTKAKTRSSRA) is disordered. At Ser-2 the chain carries N-acetylserine. Ser-2 is subject to Phosphoserine. N5-methylglutamine is present on Gln-104. Lys-119 participates in a covalent cross-link: Glycyl lysine isopeptide (Lys-Gly) (interchain with G-Cter in ubiquitin).

The protein belongs to the histone H2A family. The nucleosome is a histone octamer containing two molecules each of H2A, H2B, H3 and H4 assembled in one H3-H4 heterotetramer and two H2A-H2B heterodimers. The octamer wraps approximately 147 bp of DNA. Monoubiquitination of Lys-119 gives a specific tag for epigenetic transcriptional repression. In terms of processing, phosphorylation of Ser-2 directly represses transcription.

The protein resides in the nucleus. The protein localises to the chromosome. Its function is as follows. Core component of nucleosome. Nucleosomes wrap and compact DNA into chromatin, limiting DNA accessibility to the cellular machineries which require DNA as a template. Histones thereby play a central role in transcription regulation, DNA repair, DNA replication and chromosomal stability. DNA accessibility is regulated via a complex set of post-translational modifications of histones, also called histone code, and nucleosome remodeling. The protein is Histone H2A, embryonic of Psammechinus miliaris (Green sea urchin).